Consider the following 193-residue polypeptide: Cysteine and glycine-rich protein 1 (193 aa).

The 52-residue stretch at 10–61 (CGVCQKTVYFAEEVQCEGSSFHKSCFLCLVCKKNLDSTTVAVHGEEIYCKSC) folds into the LIM zinc-binding 1 domain. A Nuclear localization signal motif is present at residues 64 to 69 (KKYGPK). At Ser81 the chain carries Phosphoserine. An N6-acetyllysine mark is found at Lys84, Lys112, Lys131, Lys137, and Lys161. Residues 119–170 (CPRCSQAVYAAEKVIGAGKSWHKSCFRCAKCGKGLESTTLADKDGEIYCKGC) form the LIM zinc-binding 2 domain. Ser192 is modified (phosphoserine).

Interacts with ASCC1; ASCC2 and TRIP4.

It localises to the nucleus. Its function is as follows. Could play a role in neuronal development. The polypeptide is Cysteine and glycine-rich protein 1 (CSRP1) (Bos taurus (Bovine)).